A 277-amino-acid chain; its full sequence is Shikimate dehydrogenase (NADP(+)) (277 aa).

Shikimate-binding positions include 17–19 and Thr-64; that span reads SRS. The Proton acceptor role is filled by Lys-68. The shikimate site is built by Asn-88 and Asp-103. NADP(+)-binding positions include 128–132, 152–157, and Leu-217; these read GAGGS and NRTLDR. Residue Tyr-219 participates in shikimate binding. Gly-240 contacts NADP(+).

This sequence belongs to the shikimate dehydrogenase family. Homodimer.

It carries out the reaction shikimate + NADP(+) = 3-dehydroshikimate + NADPH + H(+). It functions in the pathway metabolic intermediate biosynthesis; chorismate biosynthesis; chorismate from D-erythrose 4-phosphate and phosphoenolpyruvate: step 4/7. Involved in the biosynthesis of the chorismate, which leads to the biosynthesis of aromatic amino acids. Catalyzes the reversible NADPH linked reduction of 3-dehydroshikimate (DHSA) to yield shikimate (SA). The polypeptide is Shikimate dehydrogenase (NADP(+)) (Rhodopseudomonas palustris (strain BisB18)).